The following is a 448-amino-acid chain: Fibulin-5 (448 aa).

The first 23 residues, 1 to 23 (MPGIKRILTVTILALCLPSPGNA), serve as a signal peptide directing secretion. In terms of domain architecture, EGF-like 1; calcium-binding spans 42–82 (DIDECRTIPEACRGDMMCVNQNGGYLCIPRTNPVYRGPYSN). 17 disulfide bridges follow: C46–C59, C53–C68, C131–C144, C138–C153, C155–C166, C172–C181, C177–C190, C192–C205, C211–C221, C217–C230, C232–C245, C251–C262, C258–C271, C273–C286, C292–C305, C299–C314, and C320–C332. Positions 54–56 (RGD) match the Cell attachment site motif. In terms of domain architecture, EGF-like 2; calcium-binding spans 127-167 (DVDECATDSHQCNPTQICINTEGGYTCSCTDGYWLLEGQCL). The 39-residue stretch at 168-206 (DIDECRYGYCQQLCANVPGSYSCTCNPGFTLNEDGRSCQ) folds into the EGF-like 3; calcium-binding domain. One can recognise an EGF-like 4; calcium-binding domain in the interval 207–246 (DVNECATENPCVQTCVNTYGSFICRCDPGYELEEDGVHCS). Residues 245 to 448 (CSDMDECSFS…LRIYVSQYPF (204 aa)) form an interaction with LOXL1 region. One can recognise an EGF-like 5; calcium-binding domain in the interval 247-287 (DMDECSFSEFLCQHECVNQPGTYFCSCPPGYILLDDNRSCQ). N-linked (GlcNAc...) asparagine glycans are attached at residues N283 and N296. Residues 288-333 (DINECEHRNHTCNLQQTCYNLQGGFKCIDPIRCEEPYLRISDNRCM) enclose the EGF-like 6; calcium-binding domain.

This sequence belongs to the fibulin family. In terms of assembly, homodimer. Monomer, homodimerizes in presence of Ca(2+). Interacts with ELN. Interacts (via N-terminus) with the integrins ITGAV/ITGB3, ITGAV/ITGB5 and ITGA9/ITGB1. Interacts with FBN1 (via N-terminal domain). Forms a ternary complex with ELN and FBN1. Interacts with EFEMP2 with moderate affinity. Interacts with LOXL1. In terms of processing, N-glycosylated. As to expression, expressed in skin fibroblasts (at protein level). Expressed predominantly in heart, ovary, and colon but also in kidney, pancreas, testis, lung and placenta. Not detectable in brain, liver, thymus, prostate, or peripheral blood leukocytes.

It is found in the secreted. Its subcellular location is the extracellular space. The protein resides in the extracellular matrix. Functionally, essential for elastic fiber formation, is involved in the assembly of continuous elastin (ELN) polymer and promotes the interaction of microfibrils and ELN. Stabilizes and organizes elastic fibers in the skin, lung and vasculature. Promotes adhesion of endothelial cells through interaction of integrins and the RGD motif. Vascular ligand for integrin receptors which may play a role in vascular development and remodeling. May act as an adapter that mediates the interaction between FBN1 and ELN. The protein is Fibulin-5 (FBLN5) of Homo sapiens (Human).